A 246-amino-acid chain; its full sequence is Proteasome subunit alpha type-6-A (246 aa).

Belongs to the peptidase T1A family. In terms of assembly, component of the 20S core complex of the 26S proteasome. The 26S proteasome is composed of a core protease (CP), known as the 20S proteasome, capped at one or both ends by the 19S regulatory particle (RP/PA700). The 20S proteasome core is composed of 28 subunits that are arranged in four stacked rings, resulting in a barrel-shaped structure. The two end rings are each formed by seven alpha subunits, and the two central rings are each formed by seven beta subunits. The catalytic chamber with the active sites is on the inside of the barrel. Ubiquitous low levels, higher expression in siliques and flowers.

It is found in the cytoplasm. It localises to the nucleus. The proteasome is a multicatalytic proteinase complex which is characterized by its ability to cleave peptides with Arg, Phe, Tyr, Leu, and Glu adjacent to the leaving group at neutral or slightly basic pH. The proteasome has an ATP-dependent proteolytic activity. The chain is Proteasome subunit alpha type-6-A (PAA1) from Arabidopsis thaliana (Mouse-ear cress).